We begin with the raw amino-acid sequence, 249 residues long: Diphthine synthase (249 aa).

S-adenosyl-L-methionine is bound by residues Asp83, Leu86, 111-112, Leu163, and Leu205; that span reads SI.

This sequence belongs to the diphthine synthase family. In terms of assembly, homodimer.

The catalysed reaction is 2-[(3S)-amino-3-carboxypropyl]-L-histidyl-[translation elongation factor 2] + 3 S-adenosyl-L-methionine = diphthine-[translation elongation factor 2] + 3 S-adenosyl-L-homocysteine + 3 H(+). It participates in protein modification; peptidyl-diphthamide biosynthesis. S-adenosyl-L-methionine-dependent methyltransferase that catalyzes the trimethylation of the amino group of the modified target histidine residue in translation elongation factor 2 (EF-2), to form an intermediate called diphthine. The three successive methylation reactions represent the second step of diphthamide biosynthesis. The chain is Diphthine synthase from Pyrobaculum islandicum (strain DSM 4184 / JCM 9189 / GEO3).